Consider the following 20-residue polypeptide: Apidaecin 1+ (20 aa).

The disordered stretch occupies residues 1–20 (GKPNRPRPAPIQPRPPHPRL).

It belongs to the apidaecin family.

It is found in the secreted. Functionally, antimicrobial peptide active against many Gram-negative enterobacterial and plant-associated bacterial species. Not active against other bacterial species like H.pylori, P.mirabilis, B.pertussis or N.gonorrhoeae. In terms of biological role, among others, also active against C.jejuni and L.pneumophila but not against Y.enterocolitica. Among others, also active against Y.enterocolitica butnot against L.pneumophila and C.jejuni. The protein is Apidaecin 1+ of Pimpla disparis (Parasitic wasp).